The primary structure comprises 391 residues: Phosphoprotein (391 aa).

Phosphothreonine is present on residues threonine 10 and threonine 16. Polar residues predominate over residues 54 to 65; sequence QKNIQHPTASHQ. Disordered regions lie at residues 54 to 97 and 148 to 185; these read QKNI…PEPL and PVTE…ERSG. Serine 69 carries the phosphoserine modification. Phosphothreonine occurs at positions 91, 150, and 165. Serine 188 carries the phosphoserine modification. A multimerization region spans residues 216 to 279; sequence ISANEIMDLL…MATVKIMDPG (64 aa). The stretch at 218 to 245 forms a coiled coil; it reads ANEIMDLLRGMDARLQHLEQKVDKVLAQ. Threonine 250 carries the phosphothreonine modification. Position 257 is a phosphoserine (serine 257). Residues threonine 258 and threonine 282 each carry the phosphothreonine modification. Phosphoserine occurs at positions 292 and 294. At threonine 298 the chain carries Phosphothreonine. 2 positions are modified to phosphoserine: serine 301 and serine 374. The tract at residues 343–391 is interaction with the nucleoprotein; it reads AGRKVMITKMITDCVANPQMKQAFEQRLAKASTEDALNDIKRDIIRSAI. Threonine 375 is modified (phosphothreonine).

Belongs to the rubulavirus/avulavirus P protein family. As to quaternary structure, homotetramer. Interacts (via multimerization domain) with polymerase L; this interaction forms the polymerase L-P complex. Interacts (via N-terminus) with N0 (via Ncore); this interaction allows P to chaperon N0 to avoid N polymerization before encapsidation. Interacts (via C-terminus) with N-RNA template; this interaction positions the polymerase on the template for both transcription and replication. Interacts with host RPS6KB1 kinase; this interaction may play a role in the viral replication and transcription.

Essential cofactor of the RNA polymerase L that plays a central role in the transcription and replication by forming the polymerase complex with RNA polymerase L and recruiting L to the genomic N-RNA template for RNA synthesis. Also plays a central role in the encapsidation of nascent RNA chains by forming the encapsidation complex with the nucleocapsid protein N (N-P complex). Acts as a chaperone for newly synthesized free N protein, so-called N0, allowing encapsidation of nascent RNA chains during replication. The nucleoprotein protein N prevents excessive phosphorylation of P, which leads to down-regulation of viral transcription/ replication. Participates, together with N, in the formation of viral factories (viroplasms), which are large inclusions in the host cytoplasm where replication takes place. In Homo sapiens (Human), this protein is Phosphoprotein (P/V).